The primary structure comprises 194 residues: MNLIPTVIETTNRGERAYDIYSRLLKDRIIMLGSQIDDNVANSIVSQLLFLQAQDAEKDIYLYINSPGGSVTAGFAIYDTIQHIKPDVQTICIGMAASMGSFLLAAGAKGKRFALPNAEVMIHQPLGGAQGQATEIEIAANHILKTRAKLNQILAERTGQSIEKIEQDTDRDNFLSAEEAKDYGLVDQVMVPES.

The active-site Nucleophile is the S98. Residue H123 is part of the active site.

The protein belongs to the peptidase S14 family. In terms of assembly, fourteen ClpP subunits assemble into 2 heptameric rings which stack back to back to give a disk-like structure with a central cavity, resembling the structure of eukaryotic proteasomes.

It is found in the cytoplasm. It catalyses the reaction Hydrolysis of proteins to small peptides in the presence of ATP and magnesium. alpha-casein is the usual test substrate. In the absence of ATP, only oligopeptides shorter than five residues are hydrolyzed (such as succinyl-Leu-Tyr-|-NHMec, and Leu-Tyr-Leu-|-Tyr-Trp, in which cleavage of the -Tyr-|-Leu- and -Tyr-|-Trp bonds also occurs).. Its function is as follows. Cleaves peptides in various proteins in a process that requires ATP hydrolysis. Has a chymotrypsin-like activity. Plays a major role in the degradation of misfolded proteins. This chain is ATP-dependent Clp protease proteolytic subunit, found in Staphylococcus saprophyticus subsp. saprophyticus (strain ATCC 15305 / DSM 20229 / NCIMB 8711 / NCTC 7292 / S-41).